Here is a 517-residue protein sequence, read N- to C-terminus: 2,4,6-trichlorophenol monooxygenase (517 aa).

The protein belongs to the FADH(2)-utilizing monooxygenase family. Homotetramer in solution.

It catalyses the reaction 2,4,6-trichlorophenol + FADH2 + O2 = 2-chloro-6-hydroxy-1,4-benzoquinone + FAD + 2 chloride + 3 H(+). The catalysed reaction is 2,4,6-trichlorophenol + FADH2 + O2 = 2,6-dichlorobenzoquinone + FAD + chloride + H2O + H(+). The enzyme catalyses 2,6-dichlorobenzoquinone + H2O = 2-chloro-6-hydroxy-1,4-benzoquinone + chloride + 2 H(+). It participates in aromatic compound metabolism. Its pathway is xenobiotic degradation. In terms of biological role, involved in the degradation of 2,4,6-trichlorophenol (2,4,6-TCP). Catalyzes the conversion of 2,4,6-TCP to 6-chlorohydroxyquinol (6-CHQ). The monooxygenase oxidizes 2,4,6-TCP to 2,6-dichloroquinone (2,6-DCBQ), which remains with the enzyme and is hydrolyzed to 2-chlorohydroxyquinone. 2-chlorohydroxyquinone is chemically reduced by ascorbate and NADH to 6-chlorohydroxyquinol (6-CHQ). The chain is 2,4,6-trichlorophenol monooxygenase from Cupriavidus pinatubonensis (strain JMP 134 / LMG 1197) (Cupriavidus necator (strain JMP 134)).